A 632-amino-acid polypeptide reads, in one-letter code: MAU2 chromatid cohesion factor homolog (632 aa).

TPR repeat units lie at residues 453-486 and 493-526; these read GGFY…ANAE and SCSL…ASKI.

Belongs to the SCC4/mau-2 family. As to quaternary structure, interacts with Nipped-B to form the cohesin loading complex.

It is found in the nucleus. It localises to the nucleoplasm. Required for association of the cohesin complex with chromatin during interphase. Plays a role in sister chromatid cohesion and normal progression through prometaphase. This is MAU2 chromatid cohesion factor homolog from Drosophila melanogaster (Fruit fly).